The primary structure comprises 429 residues: Probable M18 family aminopeptidase 2 (429 aa).

The Zn(2+) site is built by histidine 82, histidine 156, and histidine 401.

The protein belongs to the peptidase M18 family. The cofactor is Zn(2+).

In Pseudomonas syringae pv. syringae (strain B728a), this protein is Probable M18 family aminopeptidase 2.